A 166-amino-acid chain; its full sequence is Cytochrome c-550 2 (166 aa).

Positions 1 to 32 are cleaved as a signal peptide; it reads MFSRQFGRLATLALALAVAGCAGGEQSTTAEA. Heme c is bound by residues Cys71, Cys74, and His75.

The protein belongs to the cytochrome c family. PsbV subfamily. Requires heme c as cofactor.

The protein resides in the cell inner membrane. Probable low-potential cytochrome c, might function in photosystem II (PSII). The sequence is that of Cytochrome c-550 2 (psbV2) from Gloeobacter violaceus (strain ATCC 29082 / PCC 7421).